We begin with the raw amino-acid sequence, 496 residues long: Glycine receptor subunit beta (496 aa).

The signal sequence occupies residues 1 to 22 (MKFSLAISFFILMSLLFEDACA). The Extracellular segment spans residues 23–268 (KEKSSKKGKG…IFTLRRQVGF (246 aa)). Positions 32 to 53 (GKKKQYLCPSQQSPEDLARVPP) are disordered. Asparagine 54 carries an N-linked (GlcNAc...) asparagine glycan. Residues arginine 108 and serine 174 each contribute to the glycine site. Cysteine 183 and cysteine 197 are oxidised to a cystine. Asparagine 242 carries N-linked (GlcNAc...) asparagine glycosylation. A disulfide bridge connects residues cysteine 243 and cysteine 255. Threonine 250 is a binding site for glycine. A helical membrane pass occupies residues 269–289 (YMMGVYAPTLLIVVLSWLSFW). At 290–294 (INPDA) the chain is on the cytoplasmic side. The helical transmembrane segment at 295–315 (SAARVPLGIFSVLSLASECTT) threads the bilayer. The Extracellular portion of the chain corresponds to 316–327 (LAAELPKVSYVK). A helical transmembrane segment spans residues 328 to 349 (ALDVWLIACLLFGFASLVEYAV). Over 350–471 (VQVMLNNPKR…KPVIPTAAKR (122 aa)) the chain is Cytoplasmic. Threonine 391 carries the post-translational modification Phosphothreonine. The chain crosses the membrane as a helical span at residues 472–495 (IDLYARALFPFCFLFFNVIYWSIY). A topological domain (extracellular) is located at residue leucine 496.

The protein belongs to the ligand-gated ion channel (TC 1.A.9) family. Glycine receptor (TC 1.A.9.3) subfamily. GLRB sub-subfamily. As to quaternary structure, forms heteropentamers with glycin receptor alpha subunits. Heteropentamers with GLRA1 can be composed of two GLRA1 and three GLRB subunits, or three GLRA1 and two GLRB subunits, or four GLRA1 subunits and one GLRB subunit. Forms heteropentamers with GLRA2. Functional GLRB-GLRA2 heteropentamers contain four GLRA2 subunits and one GLRB subunit, although alternative subunit composition cannot be excluded. Forms a heteropentamer with GLRA3. Interacts with GPHN. Detected in spinal cord, brain and brain stem, especially in the periolivary region, spinal nuclei, trigeminal nucleus, medulla oblongata, pons and midbrain. Detected in the inner plexiform layer of the retina (at protein level). High levels of expression in cortex, hippocampus, thalamus and cerebellum. Detected in spinal cord.

The protein resides in the postsynaptic cell membrane. Its subcellular location is the synapse. It localises to the cell projection. It is found in the dendrite. The protein localises to the cell membrane. The protein resides in the cytoplasm. It carries out the reaction chloride(in) = chloride(out). Its activity is regulated as follows. Channel opening is triggered by extracellular glycine. Heteropentameric channels composed of GLRB and GLRA1 are activated by lower glycine levels than homopentameric GLRA1. Subunit of heteromeric glycine-gated chloride channels. Plays an important role in the down-regulation of neuronal excitability. Contributes to the generation of inhibitory postsynaptic currents. This is Glycine receptor subunit beta (Glrb) from Mus musculus (Mouse).